We begin with the raw amino-acid sequence, 439 residues long: GTPase Obg (439 aa).

The region spanning 5–164 (TDFFDQATIV…LTLELELKML (160 aa)) is the Obg domain. The OBG-type G domain occupies 165-335 (ADVGLVGFPN…LLQRVAELLR (171 aa)). Residues 171–178 (GFPNAGKS), 196–200 (FTTLT), 217–220 (DIPG), 287–290 (NKAD), and 316–318 (SAA) each bind GTP. Mg(2+) is bound by residues serine 178 and threonine 198. Residues 337–359 (DPPPQRDPVDPDEPPLEWPLPPV) are disordered. The region spanning 356–433 (LPPVDENAFT…IGRAELVWDD (78 aa)) is the OCT domain.

The protein belongs to the TRAFAC class OBG-HflX-like GTPase superfamily. OBG GTPase family. As to quaternary structure, monomer. The cofactor is Mg(2+).

It is found in the cytoplasm. Its function is as follows. An essential GTPase which binds GTP, GDP and possibly (p)ppGpp with moderate affinity, with high nucleotide exchange rates and a fairly low GTP hydrolysis rate. Plays a role in control of the cell cycle, stress response, ribosome biogenesis and in those bacteria that undergo differentiation, in morphogenesis control. This Chloroflexus aggregans (strain MD-66 / DSM 9485) protein is GTPase Obg.